We begin with the raw amino-acid sequence, 1016 residues long: S-layer protein A (1016 aa).

The first 30 residues, 1–30, serve as a signal peptide directing secretion; sequence MDLSTKKVISAGLVFIYALSLAMLVPMFLA.

Belongs to the Sulfolobales SlaA family. The mushroom-shaped unit cells of the Sulfolobales' S-layers may consist of three SlaB subunits and six SlaA subunits.

The protein resides in the secreted. Its subcellular location is the cell wall. The protein localises to the S-layer. Functionally, S-layer large protein. May form the highly ordered outer sheath. This chain is S-layer protein A, found in Acidianus ambivalens (Desulfurolobus ambivalens).